The chain runs to 875 residues: Neurotrypsin (875 aa).

A signal peptide spans 1–20 (MTLARFVLALMLGALPEVVG). N26 carries an N-linked (GlcNAc...) asparagine glycan. The interval 29 to 88 (LHHSHRHSPPPGPHYPYYLPTQQRPPRTRPPPPLPRFPRPPRALPAQRPHALQAGHTPRP) is disordered. A compositionally biased stretch (low complexity) spans 43–53 (YPYYLPTQQRP). Positions 56–71 (TRPPPPLPRFPRPPRA) are enriched in pro residues. Residues 93–165 (CPAGEPWVSV…GKVDWGYCDC (73 aa)) enclose the Kringle domain. Disulfide bonds link C93–C165, C109–C149, C138–C163, C195–C259, C208–C269, C239–C249, C305–C369, C318–C379, C349–C359, C412–C475, C425–C485, C455–C465, C525–C589, C538–C599, C569–C579, C619–C750, C661–C677, C765–C831, C794–C808, and C821–C850. 4 SRCR domains span residues 170-271 (VRLR…TCSF), 280-381 (IRLA…SCTP), 387-487 (IRLA…ACYP), and 500-601 (VRLV…ICDY). The segment at 619-630 (CGLRLLHRRQKR) is zymogen activation region. One can recognise a Peptidase S1 domain in the interval 631 to 874 (IIGGKNSLRG…FVPWIKSVTK (244 aa)). H676 functions as the Charge relay system in the catalytic mechanism. Residue N683 is glycosylated (N-linked (GlcNAc...) asparagine). Catalysis depends on D726, which acts as the Charge relay system. S825 acts as the Charge relay system in catalysis.

The protein belongs to the peptidase S1 family.

Its subcellular location is the secreted. Its function is as follows. Plays a role in neuronal plasticity and the proteolytic action may subserve structural reorganizations associated with learning and memory operations. This chain is Neurotrypsin (PRSS12), found in Pan troglodytes (Chimpanzee).